Here is an 89-residue protein sequence, read N- to C-terminus: Small ribosomal subunit protein uS14A (89 aa).

This sequence belongs to the universal ribosomal protein uS14 family. Part of the 30S ribosomal subunit. Contacts proteins S3 and S10.

In terms of biological role, binds 16S rRNA, required for the assembly of 30S particles and may also be responsible for determining the conformation of the 16S rRNA at the A site. In Ligilactobacillus salivarius (strain UCC118) (Lactobacillus salivarius), this protein is Small ribosomal subunit protein uS14A.